The chain runs to 380 residues: Cytochrome b (380 aa).

Helical transmembrane passes span Phe-34–Ala-54, Trp-78–Ile-99, Trp-114–Leu-134, and Phe-179–Thr-199. His-84 and His-98 together coordinate heme b. 2 residues coordinate heme b: His-183 and His-197. His-202 contributes to the a ubiquinone binding site. The next 4 helical transmembrane spans lie at Leu-227–His-247, Leu-289–His-309, Leu-321–Ser-341, and Phe-348–Pro-368.

Belongs to the cytochrome b family. The cytochrome bc1 complex contains 11 subunits: 3 respiratory subunits (MT-CYB, CYC1 and UQCRFS1), 2 core proteins (UQCRC1 and UQCRC2) and 6 low-molecular weight proteins (UQCRH/QCR6, UQCRB/QCR7, UQCRQ/QCR8, UQCR10/QCR9, UQCR11/QCR10 and a cleavage product of UQCRFS1). This cytochrome bc1 complex then forms a dimer. Requires heme b as cofactor.

It is found in the mitochondrion inner membrane. Functionally, component of the ubiquinol-cytochrome c reductase complex (complex III or cytochrome b-c1 complex) that is part of the mitochondrial respiratory chain. The b-c1 complex mediates electron transfer from ubiquinol to cytochrome c. Contributes to the generation of a proton gradient across the mitochondrial membrane that is then used for ATP synthesis. The polypeptide is Cytochrome b (MT-CYB) (Trogon curucui (Blue-crowned trogon)).